The chain runs to 49 residues: Lysozyme C (49 aa).

A C-type lysozyme domain is found at 1-49 (SKMKKCEFAKIAKEQHMDGYHGVSLADWVCLVNNESDFNTKAINRNKGI). Residue E35 is part of the active site.

The protein belongs to the glycosyl hydrolase 22 family. In terms of assembly, monomer.

It is found in the secreted. The enzyme catalyses Hydrolysis of (1-&gt;4)-beta-linkages between N-acetylmuramic acid and N-acetyl-D-glucosamine residues in a peptidoglycan and between N-acetyl-D-glucosamine residues in chitodextrins.. Lysozymes have primarily a bacteriolytic function; those in tissues and body fluids are associated with the monocyte-macrophage system and enhance the activity of immunoagents. The protein is Lysozyme C (LYZ) of Pseudocheirus peregrinus (Common ring-tailed possum).